The primary structure comprises 990 residues: Bifunctional glutamine synthetase adenylyltransferase/adenylyl-removing enzyme (990 aa).

Positions 1–474 are adenylyl removase; sequence MIFSAITADL…HYAKLFEGDP (474 aa). Residues 478–990 are adenylyl transferase; sequence AKLPPVDYGA…FNRLIGGEDA (513 aa).

It belongs to the GlnE family. Requires Mg(2+) as cofactor.

The catalysed reaction is [glutamine synthetase]-O(4)-(5'-adenylyl)-L-tyrosine + phosphate = [glutamine synthetase]-L-tyrosine + ADP. It catalyses the reaction [glutamine synthetase]-L-tyrosine + ATP = [glutamine synthetase]-O(4)-(5'-adenylyl)-L-tyrosine + diphosphate. Involved in the regulation of glutamine synthetase GlnA, a key enzyme in the process to assimilate ammonia. When cellular nitrogen levels are high, the C-terminal adenylyl transferase (AT) inactivates GlnA by covalent transfer of an adenylyl group from ATP to specific tyrosine residue of GlnA, thus reducing its activity. Conversely, when nitrogen levels are low, the N-terminal adenylyl removase (AR) activates GlnA by removing the adenylyl group by phosphorolysis, increasing its activity. The regulatory region of GlnE binds the signal transduction protein PII (GlnB) which indicates the nitrogen status of the cell. The polypeptide is Bifunctional glutamine synthetase adenylyltransferase/adenylyl-removing enzyme (Rhodopseudomonas palustris (strain TIE-1)).